Reading from the N-terminus, the 258-residue chain is Imidazole glycerol phosphate synthase subunit HisF (258 aa).

Active-site residues include aspartate 11 and aspartate 130.

The protein belongs to the HisA/HisF family. In terms of assembly, heterodimer of HisH and HisF.

The protein resides in the cytoplasm. The enzyme catalyses 5-[(5-phospho-1-deoxy-D-ribulos-1-ylimino)methylamino]-1-(5-phospho-beta-D-ribosyl)imidazole-4-carboxamide + L-glutamine = D-erythro-1-(imidazol-4-yl)glycerol 3-phosphate + 5-amino-1-(5-phospho-beta-D-ribosyl)imidazole-4-carboxamide + L-glutamate + H(+). It participates in amino-acid biosynthesis; L-histidine biosynthesis; L-histidine from 5-phospho-alpha-D-ribose 1-diphosphate: step 5/9. Functionally, IGPS catalyzes the conversion of PRFAR and glutamine to IGP, AICAR and glutamate. The HisF subunit catalyzes the cyclization activity that produces IGP and AICAR from PRFAR using the ammonia provided by the HisH subunit. The sequence is that of Imidazole glycerol phosphate synthase subunit HisF from Xanthobacter autotrophicus (strain ATCC BAA-1158 / Py2).